We begin with the raw amino-acid sequence, 311 residues long: tRNA dimethylallyltransferase (311 aa).

10 to 17 lines the ATP pocket; the sequence is GPTASGKT. Position 12 to 17 (12 to 17) interacts with substrate; it reads TASGKT. 3 interaction with substrate tRNA regions span residues 35 to 38, 159 to 163, and 240 to 245; these read DSAL, QRINR, and RCVGYR.

It belongs to the IPP transferase family. In terms of assembly, monomer. Mg(2+) is required as a cofactor.

It carries out the reaction adenosine(37) in tRNA + dimethylallyl diphosphate = N(6)-dimethylallyladenosine(37) in tRNA + diphosphate. In terms of biological role, catalyzes the transfer of a dimethylallyl group onto the adenine at position 37 in tRNAs that read codons beginning with uridine, leading to the formation of N6-(dimethylallyl)adenosine (i(6)A). This chain is tRNA dimethylallyltransferase, found in Haemophilus influenzae (strain PittEE).